Reading from the N-terminus, the 257-residue chain is L-aspartate dehydrogenase (257 aa).

Positions 124 and 180 each coordinate NAD(+). Residue His-208 is part of the active site.

This sequence belongs to the L-aspartate dehydrogenase family.

It catalyses the reaction L-aspartate + NADP(+) + H2O = oxaloacetate + NH4(+) + NADPH + H(+). It carries out the reaction L-aspartate + NAD(+) + H2O = oxaloacetate + NH4(+) + NADH + H(+). It participates in cofactor biosynthesis; NAD(+) biosynthesis; iminoaspartate from L-aspartate (dehydrogenase route): step 1/1. Specifically catalyzes the NAD or NADP-dependent dehydrogenation of L-aspartate to iminoaspartate. The chain is L-aspartate dehydrogenase from Methanothermobacter thermautotrophicus (strain ATCC 29096 / DSM 1053 / JCM 10044 / NBRC 100330 / Delta H) (Methanobacterium thermoautotrophicum).